Here is a 593-residue protein sequence, read N- to C-terminus: Aspartate--tRNA(Asp/Asn) ligase (593 aa).

Residue Glu-175 participates in L-aspartate binding. The segment at 199–202 is aspartate; the sequence is QQYK. Positions 221 and 452 each coordinate L-aspartate. 221–223 provides a ligand contact to ATP; it reads RDE. Glu-486 lines the ATP pocket. Arg-493 contributes to the L-aspartate binding site. ATP is bound at residue 538 to 541; it reads GVDR.

It belongs to the class-II aminoacyl-tRNA synthetase family. Type 1 subfamily. In terms of assembly, homodimer.

Its subcellular location is the cytoplasm. It carries out the reaction tRNA(Asx) + L-aspartate + ATP = L-aspartyl-tRNA(Asx) + AMP + diphosphate. Functionally, aspartyl-tRNA synthetase with relaxed tRNA specificity since it is able to aspartylate not only its cognate tRNA(Asp) but also tRNA(Asn). Reaction proceeds in two steps: L-aspartate is first activated by ATP to form Asp-AMP and then transferred to the acceptor end of tRNA(Asp/Asn). This is Aspartate--tRNA(Asp/Asn) ligase from Novosphingobium aromaticivorans (strain ATCC 700278 / DSM 12444 / CCUG 56034 / CIP 105152 / NBRC 16084 / F199).